The sequence spans 399 residues: Glutamyl-tRNA reductase (399 aa).

Substrate-binding positions include 45 to 48, serine 93, 98 to 100, and glutamine 104; these read TCNR and EDQ. Residue cysteine 46 is the Nucleophile of the active site. NADP(+) is bound at residue 173-178; sequence GAGKMG.

This sequence belongs to the glutamyl-tRNA reductase family. As to quaternary structure, homodimer.

It catalyses the reaction (S)-4-amino-5-oxopentanoate + tRNA(Glu) + NADP(+) = L-glutamyl-tRNA(Glu) + NADPH + H(+). The protein operates within porphyrin-containing compound metabolism; protoporphyrin-IX biosynthesis; 5-aminolevulinate from L-glutamyl-tRNA(Glu): step 1/2. In terms of biological role, catalyzes the NADPH-dependent reduction of glutamyl-tRNA(Glu) to glutamate 1-semialdehyde (GSA). The sequence is that of Glutamyl-tRNA reductase from Methanobrevibacter smithii (strain ATCC 35061 / DSM 861 / OCM 144 / PS).